A 300-amino-acid polypeptide reads, in one-letter code: Cholesterol 25-hydroxylase-like protein (300 aa).

An N-linked (GlcNAc...) asparagine glycan is attached at N9. Transmembrane regions (helical) follow at residues 43 to 63 (LFPP…FTFI), 95 to 115 (LQGW…LIWV), and 130 to 152 (MVSQ…HYFN). The Fatty acid hydroxylase domain maps to 135 to 266 (AIFFLAFDFT…WFNYLDRLMG (132 aa)). Residues 148 to 152 (FHYFN) carry the Histidine box-1 motif. Residues 163–167 (HSVHH) carry the Histidine box-2 motif. Residues 180–200 (LHPFELFFVATFITTVPWIFP) traverse the membrane as a helical segment. The Histidine box-3 motif lies at 242–248 (AHDMHHL).

It belongs to the sterol desaturase family. The cofactor is Fe cation.

The protein resides in the membrane. Its function is as follows. Probable sterol desaturase. The protein is Cholesterol 25-hydroxylase-like protein of Caenorhabditis briggsae.